We begin with the raw amino-acid sequence, 588 residues long: L-fucose isomerase (588 aa).

Catalysis depends on proton acceptor residues E335 and D359. Mn(2+) contacts are provided by E335, D359, and H525.

This sequence belongs to the L-fucose isomerase family. Mn(2+) serves as cofactor.

It is found in the cytoplasm. It catalyses the reaction L-fucose = L-fuculose. It functions in the pathway carbohydrate degradation; L-fucose degradation; L-lactaldehyde and glycerone phosphate from L-fucose: step 1/3. In terms of biological role, converts the aldose L-fucose into the corresponding ketose L-fuculose. This chain is L-fucose isomerase, found in Streptococcus pneumoniae (strain ATCC 700669 / Spain 23F-1).